Reading from the N-terminus, the 447-residue chain is Glutamate--tRNA ligase 1 (447 aa).

The 'HIGH' region signature appears at 10–20; it reads PSPTGMLHVGN. Residues 240 to 244 carry the 'KMSKS' region motif; it reads KISKR. Lys-243 lines the ATP pocket.

The protein belongs to the class-I aminoacyl-tRNA synthetase family. Glutamate--tRNA ligase type 1 subfamily. As to quaternary structure, monomer.

Its subcellular location is the cytoplasm. It carries out the reaction tRNA(Glu) + L-glutamate + ATP = L-glutamyl-tRNA(Glu) + AMP + diphosphate. Its function is as follows. Catalyzes the attachment of glutamate to tRNA(Glu) in a two-step reaction: glutamate is first activated by ATP to form Glu-AMP and then transferred to the acceptor end of tRNA(Glu). The chain is Glutamate--tRNA ligase 1 from Rickettsia massiliae (strain Mtu5).